A 385-amino-acid polypeptide reads, in one-letter code: Glutamate 5-kinase (385 aa).

Lysine 18 provides a ligand contact to ATP. Residues serine 57, aspartate 144, and asparagine 156 each coordinate substrate. Residue 218–224 (TGGMKSK) participates in ATP binding. One can recognise a PUA domain in the interval 283 to 361 (RGVLSIDAGA…SRIEQVLGHK (79 aa)).

The protein belongs to the glutamate 5-kinase family.

Its subcellular location is the cytoplasm. The catalysed reaction is L-glutamate + ATP = L-glutamyl 5-phosphate + ADP. Its pathway is amino-acid biosynthesis; L-proline biosynthesis; L-glutamate 5-semialdehyde from L-glutamate: step 1/2. Functionally, catalyzes the transfer of a phosphate group to glutamate to form L-glutamate 5-phosphate. This is Glutamate 5-kinase from Syntrophus aciditrophicus (strain SB).